We begin with the raw amino-acid sequence, 534 residues long: Calmodulin calcium-dependent NAD kinase (534 aa).

Residues 167–196 are calmodulin-binding; that stretch reads QKVPKLKDFVMAATRKQRFERVTKDLKVKR. ATP is bound at residue 238-245; that stretch reads GGMGAGKS.

In terms of assembly, interacts with calmodulin (CaM) in a calcium Ca(2+)-dependent manner in vitro. The cofactor is Ca(2+).

The protein resides in the mitochondrion outer membrane. It carries out the reaction NAD(+) + ATP = ADP + NADP(+) + H(+). Its function is as follows. Phosphorylates NAD(+) to produce NADP(+) in a calmodulin calcium-dependent manner. Does not possess activity toward NADH. Has broad specificity for the phosphoryl donor, as ATP, CTP, GTP and UTP can be used interchangeably and produce similar efficiencies. May play a role in producing NADP(H) needed to regulate the elicitor-induced reactive oxygen species (ROS) burst by sustaining the activity of NADPH oxidases. Does not seem to play a role in photosynthesis-driven growth. In Arabidopsis thaliana (Mouse-ear cress), this protein is Calmodulin calcium-dependent NAD kinase.